The following is a 272-amino-acid chain: tRNA pseudouridine synthase A (272 aa).

The active-site Nucleophile is the Asp-51. Tyr-109 serves as a coordination point for substrate.

Belongs to the tRNA pseudouridine synthase TruA family. In terms of assembly, homodimer.

The catalysed reaction is uridine(38/39/40) in tRNA = pseudouridine(38/39/40) in tRNA. Its function is as follows. Formation of pseudouridine at positions 38, 39 and 40 in the anticodon stem and loop of transfer RNAs. This Verminephrobacter eiseniae (strain EF01-2) protein is tRNA pseudouridine synthase A.